The sequence spans 438 residues: Transmembrane protease serine 11F (438 aa).

Residues 1–32 lie on the Cytoplasmic side of the membrane; sequence MMYAPVEFSEAEFSRAEYQRKQQFWDSVRLAL. A helical; Signal-anchor for type II membrane protein membrane pass occupies residues 33–53; the sequence is FTLAIVAIIGIAIGIVTHFVV. The Extracellular portion of the chain corresponds to 54 to 438; that stretch reads EDDKSFYYLA…RDWIASKTGM (385 aa). The 119-residue stretch at 57–175 folds into the SEA domain; sequence KSFYYLASFK…PSFRLTPIDS (119 aa). In terms of domain architecture, Peptidase S1 spans 206–437; it reads IVQGRETAME…YRDWIASKTG (232 aa). Cys-233 and Cys-249 form a disulfide bridge. Residues His-248 and Asp-293 each act as charge relay system in the active site. Cystine bridges form between Cys-358–Cys-374 and Cys-385–Cys-413. The active-site Charge relay system is Ser-389.

It belongs to the peptidase S1 family.

It localises to the membrane. Functionally, probable serine protease. This is Transmembrane protease serine 11F (TMPRSS11F) from Homo sapiens (Human).